Reading from the N-terminus, the 109-residue chain is uncharacterized protein (109 aa).

A helical transmembrane segment spans residues 75-95 (LHFFFLFWLLNFILFFRIHLY).

Its subcellular location is the membrane. This is an uncharacterized protein from Schizosaccharomyces pombe (strain 972 / ATCC 24843) (Fission yeast).